Reading from the N-terminus, the 215-residue chain is Probable transaldolase (215 aa).

Lys-83 (schiff-base intermediate with substrate) is an active-site residue.

This sequence belongs to the transaldolase family. Type 3B subfamily.

Its subcellular location is the cytoplasm. The enzyme catalyses D-sedoheptulose 7-phosphate + D-glyceraldehyde 3-phosphate = D-erythrose 4-phosphate + beta-D-fructose 6-phosphate. It participates in carbohydrate degradation; pentose phosphate pathway; D-glyceraldehyde 3-phosphate and beta-D-fructose 6-phosphate from D-ribose 5-phosphate and D-xylulose 5-phosphate (non-oxidative stage): step 2/3. In terms of biological role, transaldolase is important for the balance of metabolites in the pentose-phosphate pathway. This is Probable transaldolase from Methanococcus maripaludis (strain C5 / ATCC BAA-1333).